The chain runs to 86 residues: Muscarinic toxin 2 (86 aa).

The signal sequence occupies residues 1–21; it reads MKTLLLTLVVVTIVCLDLGYT. Disulfide bonds link Cys24/Cys45, Cys38/Cys63, Cys67/Cys78, and Cys79/Cys84.

This sequence belongs to the three-finger toxin family. Short-chain subfamily. Aminergic toxin sub-subfamily. Monomer. In terms of tissue distribution, expressed by the venom gland.

Its subcellular location is the secreted. Its function is as follows. Binds irreversibly to M1 (CHRM1) muscarinic acetylcholine receptors, and reveals a slightly weaker effect on M3 (CHRM3) receptors. The mechanism of toxin-receptor interaction comprises at least two steps. The first step is fast with no competition between the toxin and the antagonist. The second step is slow with formation of a more stable toxin-receptor complex and inhibition of the antagonist binding. The sequence is that of Muscarinic toxin 2 from Dendroaspis angusticeps (Eastern green mamba).